The following is a 77-amino-acid chain: MVPYTETSICLTNVPCGYMNVSGCFKGADALTILHECDEANVYTATFWSTSSGTRRNSAVICTLIANLMAFFMLLTM.

The helical transmembrane segment at 57–76 (NSAVICTLIANLMAFFMLLT) threads the bilayer.

It is found in the membrane. This is an uncharacterized protein from Schizosaccharomyces pombe (strain 972 / ATCC 24843) (Fission yeast).